We begin with the raw amino-acid sequence, 65 residues long: DNA gyrase inhibitor YacG (65 aa).

Positions 8, 11, 27, and 31 each coordinate Zn(2+). Residues 43–65 (SYRIPDTGKDSEKQENDPSGSEK) are disordered. The segment covering 48 to 65 (DTGKDSEKQENDPSGSEK) has biased composition (basic and acidic residues).

Belongs to the DNA gyrase inhibitor YacG family. In terms of assembly, interacts with GyrB. Requires Zn(2+) as cofactor.

Its function is as follows. Inhibits all the catalytic activities of DNA gyrase by preventing its interaction with DNA. Acts by binding directly to the C-terminal domain of GyrB, which probably disrupts DNA binding by the gyrase. The polypeptide is DNA gyrase inhibitor YacG (Nitrosospira multiformis (strain ATCC 25196 / NCIMB 11849 / C 71)).